We begin with the raw amino-acid sequence, 473 residues long: ATP synthase subunit beta (473 aa).

158-165 (GGAGVGKT) provides a ligand contact to ATP.

The protein belongs to the ATPase alpha/beta chains family. F-type ATPases have 2 components, CF(1) - the catalytic core - and CF(0) - the membrane proton channel. CF(1) has five subunits: alpha(3), beta(3), gamma(1), delta(1), epsilon(1). CF(0) has three main subunits: a(1), b(2) and c(9-12). The alpha and beta chains form an alternating ring which encloses part of the gamma chain. CF(1) is attached to CF(0) by a central stalk formed by the gamma and epsilon chains, while a peripheral stalk is formed by the delta and b chains.

The protein resides in the cell membrane. It carries out the reaction ATP + H2O + 4 H(+)(in) = ADP + phosphate + 5 H(+)(out). Functionally, produces ATP from ADP in the presence of a proton gradient across the membrane. The catalytic sites are hosted primarily by the beta subunits. This is ATP synthase subunit beta from Bacillus licheniformis (strain ATCC 14580 / DSM 13 / JCM 2505 / CCUG 7422 / NBRC 12200 / NCIMB 9375 / NCTC 10341 / NRRL NRS-1264 / Gibson 46).